Here is a 229-residue protein sequence, read N- to C-terminus: CMRF35-like molecule 6 (229 aa).

The signal sequence occupies residues 1 to 21 (MNPRVIRLWLPSAVLLSLVPG). The Ig-like V-type domain occupies 22–126 (HFPVRGPSTV…FYDAYLQIDK (105 aa)). Topologically, residues 22-188 (HFPVRGPSTV…ELRSLLSSPH (167 aa)) are extracellular. A disulfide bridge connects residues cysteine 43 and cysteine 110. 2 N-linked (GlcNAc...) asparagine glycosylation sites follow: asparagine 90 and asparagine 99. Residues 189–209 (FWILVSLKLPLFLSMLGALLW) form a helical membrane-spanning segment. The Cytoplasmic portion of the chain corresponds to 210–229 (VNRPQRCSGGSSAWPCYENQ).

This sequence belongs to the CD300 family.

Its subcellular location is the cell membrane. This Mus musculus (Mouse) protein is CMRF35-like molecule 6 (Cd300c).